We begin with the raw amino-acid sequence, 429 residues long: Dihydroorotase (429 aa).

Zn(2+)-binding residues include histidine 61 and histidine 63. Residues 63–65 and asparagine 95 contribute to the substrate site; that span reads HYR. Positions 153, 180, and 233 each coordinate Zn(2+). Asparagine 279 serves as a coordination point for substrate. Aspartate 306 contacts Zn(2+). The active site involves aspartate 306. Substrate-binding positions include histidine 310 and 324–325; that span reads FG.

The protein belongs to the metallo-dependent hydrolases superfamily. DHOase family. Class I DHOase subfamily. The cofactor is Zn(2+).

The catalysed reaction is (S)-dihydroorotate + H2O = N-carbamoyl-L-aspartate + H(+). Its pathway is pyrimidine metabolism; UMP biosynthesis via de novo pathway; (S)-dihydroorotate from bicarbonate: step 3/3. Catalyzes the reversible cyclization of carbamoyl aspartate to dihydroorotate. The protein is Dihydroorotase of Ligilactobacillus salivarius (strain UCC118) (Lactobacillus salivarius).